Consider the following 31-residue polypeptide: Protamine-Z (31 aa).

The tract at residues 1–31 (ARRRRSRRASRPVRRRRPRRVSRRRRARRRR) is disordered.

As to expression, testis.

The protein localises to the nucleus. The protein resides in the chromosome. Protamines substitute for histones in the chromatin of sperm during the haploid phase of spermatogenesis. They compact sperm DNA into a highly condensed, stable and inactive complex. This is Protamine-Z from Clupea harengus (Atlantic herring).